A 556-amino-acid chain; its full sequence is 2-succinyl-5-enolpyruvyl-6-hydroxy-3-cyclohexene-1-carboxylate synthase (556 aa).

It belongs to the TPP enzyme family. MenD subfamily. Homodimer. Mg(2+) is required as a cofactor. Requires Mn(2+) as cofactor. The cofactor is thiamine diphosphate.

It carries out the reaction isochorismate + 2-oxoglutarate + H(+) = 5-enolpyruvoyl-6-hydroxy-2-succinyl-cyclohex-3-ene-1-carboxylate + CO2. The protein operates within quinol/quinone metabolism; 1,4-dihydroxy-2-naphthoate biosynthesis; 1,4-dihydroxy-2-naphthoate from chorismate: step 2/7. Its pathway is quinol/quinone metabolism; menaquinone biosynthesis. In terms of biological role, catalyzes the thiamine diphosphate-dependent decarboxylation of 2-oxoglutarate and the subsequent addition of the resulting succinic semialdehyde-thiamine pyrophosphate anion to isochorismate to yield 2-succinyl-5-enolpyruvyl-6-hydroxy-3-cyclohexene-1-carboxylate (SEPHCHC). This Escherichia coli (strain SMS-3-5 / SECEC) protein is 2-succinyl-5-enolpyruvyl-6-hydroxy-3-cyclohexene-1-carboxylate synthase.